The following is a 65-amino-acid chain: Large ribosomal subunit protein uL29 (65 aa).

Belongs to the universal ribosomal protein uL29 family.

The polypeptide is Large ribosomal subunit protein uL29 (Acinetobacter baylyi (strain ATCC 33305 / BD413 / ADP1)).